The following is a 132-amino-acid chain: Translation initiation factor 5A (132 aa).

Residue Lys-36 is modified to Hypusine.

Belongs to the eIF-5A family.

Its subcellular location is the cytoplasm. Functions by promoting the formation of the first peptide bond. This chain is Translation initiation factor 5A (eIF5A), found in Desulfurococcus amylolyticus (strain DSM 18924 / JCM 16383 / VKM B-2413 / 1221n) (Desulfurococcus kamchatkensis).